The sequence spans 514 residues: Embryonic protein UVS.2 (514 aa).

Positions 1–19 are cleaved as a signal peptide; that stretch reads MDVKISAILLACIIQYAVS. Residues 90 to 286 form the Peptidase M12A domain; that stretch reads SAINDARFLW…SKINKLYECN (197 aa). A glycan (N-linked (GlcNAc...) asparagine) is linked at Asn112. 6 disulfide bridges follow: Cys137–Cys285, Cys158–Cys178, Cys288–Cys314, Cys340–Cys363, Cys402–Cys428, and Cys455–Cys475. His186 contacts Zn(2+). The active site involves Glu187. Zn(2+)-binding residues include His190 and His196. N-linked (GlcNAc...) asparagine glycosylation is present at Asn199. CUB domains are found at residues 288-400 and 402-513; these read CSNL…YGSI and CGGA…YTFV. 3 N-linked (GlcNAc...) asparagine glycosylation sites follow: Asn421, Asn427, and Asn464.

The cofactor is Zn(2+).

The protein is Embryonic protein UVS.2 of Xenopus laevis (African clawed frog).